The chain runs to 131 residues: Large-conductance mechanosensitive channel (131 aa).

Transmembrane regions (helical) follow at residues 14–34 (VIDL…VTSL) and 67–87 (GSFI…FIFI).

Belongs to the MscL family. As to quaternary structure, homopentamer.

The protein localises to the cell membrane. Its function is as follows. Channel that opens in response to stretch forces in the membrane lipid bilayer. May participate in the regulation of osmotic pressure changes within the cell. This chain is Large-conductance mechanosensitive channel, found in Bacillus pumilus (strain SAFR-032).